A 227-amino-acid polypeptide reads, in one-letter code: UPF0173 metal-dependent hydrolase Bsph_4138 (227 aa).

It belongs to the UPF0173 family.

The sequence is that of UPF0173 metal-dependent hydrolase Bsph_4138 from Lysinibacillus sphaericus (strain C3-41).